A 577-amino-acid chain; its full sequence is Aspartate--tRNA(Asp/Asn) ligase (577 aa).

Glu171 is an L-aspartate binding site. An aspartate region spans residues 195 to 198 (QLFK). Arg217 serves as a coordination point for L-aspartate. Residues 217–219 (RDE) and Gln226 contribute to the ATP site. L-aspartate is bound at residue His444. Glu474 lines the ATP pocket. Residue Arg481 participates in L-aspartate binding. 526–529 (GFDR) provides a ligand contact to ATP.

Belongs to the class-II aminoacyl-tRNA synthetase family. Type 1 subfamily. Homodimer.

Its subcellular location is the cytoplasm. The enzyme catalyses tRNA(Asx) + L-aspartate + ATP = L-aspartyl-tRNA(Asx) + AMP + diphosphate. Functionally, aspartyl-tRNA synthetase with relaxed tRNA specificity since it is able to aspartylate not only its cognate tRNA(Asp) but also tRNA(Asn). Reaction proceeds in two steps: L-aspartate is first activated by ATP to form Asp-AMP and then transferred to the acceptor end of tRNA(Asp/Asn). The protein is Aspartate--tRNA(Asp/Asn) ligase of Helicobacter pylori (strain Shi470).